Reading from the N-terminus, the 91-residue chain is MSRSIKKGPFIDDHLQKKVDQSLESGSRKVIKTWSRRSDISPEMVGLTFAVHNGKKFIPVFVSENMVGHKLGEFSPTRTYYGHSADKKGKR.

The protein belongs to the universal ribosomal protein uS19 family.

In terms of biological role, protein S19 forms a complex with S13 that binds strongly to the 16S ribosomal RNA. The sequence is that of Small ribosomal subunit protein uS19 from Desulfotalea psychrophila (strain LSv54 / DSM 12343).